A 740-amino-acid polypeptide reads, in one-letter code: ATP-dependent RNA helicase DDX1 (740 aa).

A necessary for interaction with HNRNPK region spans residues 1-295 (MAAFSEMGVM…APKALIVEPS (295 aa)). Residues 1-448 (MAAFSEMGVM…DTVHHVVVPV (448 aa)) form an interaction with dsRNA region. Positions 1-525 (MAAFSEMGVM…KIDCDNLEQY (525 aa)) are necessary for interaction with RELA. One can recognise a Helicase ATP-binding domain in the interval 2–428 (AAFSEMGVMP…SEKIMHFPTW (427 aa)). Position 46 to 53 (46 to 53 (AETGSGKT)) interacts with ATP. The 178-residue stretch at 70–247 (DQQEGKKGKA…LKFNFGEEEF (178 aa)) folds into the B30.2/SPRY domain. Residues K239 and K268 each carry the N6-acetyllysine modification. K281 is modified (N6-acetyllysine; alternate). A Glycyl lysine isopeptide (Lys-Gly) (interchain with G-Cter in SUMO2); alternate cross-link involves residue K281. The short motif at 370-373 (DEAD) is the DEAD box element. At S481 the chain carries Phosphoserine. A Helicase C-terminal domain is found at 493-681 (KGEYAVRAIK…QVEPDIKVPV (189 aa)). Residues 525–740 (YFMQQGGGPD…YLPNQLFRTF (216 aa)) are necessary for interaction with HNRNPK.

The protein belongs to the DEAD box helicase family. DDX1 subfamily. Found in a multi-helicase-TICAM1 complex at least composed of DHX36, DDX1, DDX21 and TICAM1; this complex exists in resting cells with or without poly(I:C) RNA ligand stimulation. Interacts with DHX36. Interacts (via B30.2/SPRY domain) with DDX21 (via N-terminus); this interaction serves as bridges to TICAM1. Interacts with FAM98A (via N- and C-terminus). Interacts with PHF5A (via C-terminus). Interacts with MBNL1. Interacts with CSTF2. Interacts with HNRNPK. Interacts with ATM. Interacts with RELA (via C-terminus). Component of the tRNA-splicing ligase complex. Interacts with PQBP1. Interacts with ERCC6. Phosphorylated by ATM kinase; phosphorylation is increased in response to ionizing radiation (IR).

The protein resides in the nucleus. Its subcellular location is the cytoplasm. It localises to the cytoplasmic granule. It is found in the cytosol. The protein localises to the mitochondrion. The catalysed reaction is ATP + H2O = ADP + phosphate + H(+). Acts as an ATP-dependent RNA helicase, able to unwind both RNA-RNA and RNA-DNA duplexes. Possesses 5' single-stranded RNA overhang nuclease activity. Possesses ATPase activity on various RNA, but not DNA polynucleotides. May play a role in RNA clearance at DNA double-strand breaks (DSBs), thereby facilitating the template-guided repair of transcriptionally active regions of the genome. Together with RELA, acts as a coactivator to enhance NF-kappa-B-mediated transcriptional activation. Acts as a positive transcriptional regulator of cyclin CCND2 expression. Binds to the cyclin CCND2 promoter region. Associates with chromatin at the NF-kappa-B promoter region via association with RELA. Binds to poly(A) RNA. May be involved in 3'-end cleavage and polyadenylation of pre-mRNAs. Component of the tRNA-splicing ligase complex required to facilitate the enzymatic turnover of catalytic subunit RTCB: together with archease (ZBTB8OS), acts by facilitating the guanylylation of RTCB, a key intermediate step in tRNA ligation. Component of a multi-helicase-TICAM1 complex that acts as a cytoplasmic sensor of viral double-stranded RNA (dsRNA) and plays a role in the activation of a cascade of antiviral responses including the induction of pro-inflammatory cytokines via the adapter molecule TICAM1. Specifically binds (via helicase ATP-binding domain) on both short and long poly(I:C) dsRNA. This Bos taurus (Bovine) protein is ATP-dependent RNA helicase DDX1 (DDX1).